Here is a 388-residue protein sequence, read N- to C-terminus: Na(+)/H(+) antiporter NhaA (388 aa).

Over 1-11 the chain is Cytoplasmic; it reads MKHLHRFFSSD. A helical transmembrane segment spans residues 12-31; sequence ASGGIILIIAAILAMIMANS. Residues 32–58 are Periplasmic-facing; sequence GATSGWYHDFLETPVQLRVGSLEINKN. A helical transmembrane segment spans residues 59 to 80; sequence MLLWINDALMAVFFLLVGLEVK. The Cytoplasmic portion of the chain corresponds to 81–96; it reads RELMQGSLASLRQAAF. Residues 97–116 traverse the membrane as a helical segment; the sequence is PVIAAIGGMIVPALLYLAFN. Topologically, residues 117–122 are periplasmic; sequence YADPIT. A helical membrane pass occupies residues 123-130; it reads REGWAIPA. The Cytoplasmic segment spans residues 131–154; that stretch reads ATDIAFALGVLALLGSRVPLALKI. A helical membrane pass occupies residues 155–176; the sequence is FLMALAIIDDLGAIIIIALFYT. At 177–180 the chain is on the periplasmic side; sequence NDLS. A helical transmembrane segment spans residues 181-200; that stretch reads MASLGVAAVAIAVLAVLNLC. Residues 201 to 204 are Cytoplasmic-facing; sequence GVRR. A helical membrane pass occupies residues 205 to 222; the sequence is TGVYILVGVVLWTAVLKS. A topological domain (periplasmic) is located at residue G223. The chain crosses the membrane as a helical span at residues 224-236; sequence VHATLAGVIVGFF. Residues 237–253 are Cytoplasmic-facing; the sequence is IPLKEKHGRSPAKRLEH. Residues 254 to 272 form a helical membrane-spanning segment; that stretch reads VLHPWVAYLILPLFAFANA. Topologically, residues 273–286 are periplasmic; that stretch reads GVSLQGVTLDGLTS. Residues 287 to 310 form a helical membrane-spanning segment; it reads ILPLGIIAGLLIGKPLGISLFCWL. Topologically, residues 311–339 are cytoplasmic; it reads ALRLKLAHLPEGTTYQQIMAVGILCGIGF. Residues 340–350 form a helical membrane-spanning segment; the sequence is TMSIFIASLAF. Residues 351-357 lie on the Periplasmic side of the membrane; sequence GSVDPEL. The helical transmembrane segment at 358 to 380 threads the bilayer; that stretch reads INWAKLGILVGSISSAVIGYSWL. At 381–388 the chain is on the cytoplasmic side; it reads RVRLRPSV.

The protein belongs to the NhaA Na(+)/H(+) (TC 2.A.33) antiporter family.

Its subcellular location is the cell inner membrane. It catalyses the reaction Na(+)(in) + 2 H(+)(out) = Na(+)(out) + 2 H(+)(in). Functionally, na(+)/H(+) antiporter that extrudes sodium in exchange for external protons. The polypeptide is Na(+)/H(+) antiporter NhaA (Escherichia coli O9:H4 (strain HS)).